Here is a 611-residue protein sequence, read N- to C-terminus: Cilia- and flagella-associated protein 100 (611 aa).

Residues M1 to K17 are compositionally biased toward polar residues. The interval M1–S57 is disordered. The segment covering L20–E32 has biased composition (low complexity). The segment covering E33–P47 has biased composition (basic and acidic residues). Coiled coils occupy residues S101–R128, A164–F203, and L230–K257. 2 disordered regions span residues E287–T323 and S338–P380. A compositionally biased stretch (low complexity) spans S338 to G357. 2 coiled-coil regions span residues V393 to E432 and Q526 to T578.

It belongs to the CFAP100 family.

It localises to the cytoplasm. The protein resides in the cytoskeleton. It is found in the cilium axoneme. May play a role in ciliary/flagellar motility by regulating the assembly and the activity of axonemal inner dynein arm. This chain is Cilia- and flagella-associated protein 100, found in Homo sapiens (Human).